The sequence spans 1050 residues: Nuclear pore complex-interacting protein family member B3 (1050 aa).

A helical membrane pass occupies residues 63 to 87 (VIIAFPTSYKVVITLWIVYLWVSLL). Disordered regions lie at residues 241–262 (NRMGHQPPPPTQQHSITDNSLS), 290–574 (LTPL…NIKT), and 785–1050 (ERLR…RRLS). Residues 252–262 (QQHSITDNSLS) are compositionally biased toward polar residues. Over residues 349 to 359 (PLPPSALPSAP) the composition is skewed to pro residues. Basic and acidic residues-rich tracts occupy residues 406-416 (DNIKTPAERLR), 448-458 (DNIKTPAERLR), 490-500 (DNIKTPAERLR), 528-538 (DNIKTPAERLR), 820-830 (DNIKTPAERLR), 862-872 (DNIKTPAERLR), and 904-914 (DNIKTPAERLR).

Belongs to the NPIP family.

Its subcellular location is the membrane. This is Nuclear pore complex-interacting protein family member B3 (NPIPB3) from Homo sapiens (Human).